The sequence spans 397 residues: Succinate--CoA ligase [ADP-forming] subunit beta (397 aa).

The ATP-grasp domain maps to Lys9–Ala254. Residues Lys46, Gly53 to Gly55, Glu109, Ser112, and Glu117 contribute to the ATP site. Asn209 and Asp223 together coordinate Mg(2+). Substrate contacts are provided by residues Asn274 and Gly331 to Met333.

The protein belongs to the succinate/malate CoA ligase beta subunit family. In terms of assembly, heterotetramer of two alpha and two beta subunits. It depends on Mg(2+) as a cofactor.

It catalyses the reaction succinate + ATP + CoA = succinyl-CoA + ADP + phosphate. It carries out the reaction GTP + succinate + CoA = succinyl-CoA + GDP + phosphate. The protein operates within carbohydrate metabolism; tricarboxylic acid cycle; succinate from succinyl-CoA (ligase route): step 1/1. Its function is as follows. Succinyl-CoA synthetase functions in the citric acid cycle (TCA), coupling the hydrolysis of succinyl-CoA to the synthesis of either ATP or GTP and thus represents the only step of substrate-level phosphorylation in the TCA. The beta subunit provides nucleotide specificity of the enzyme and binds the substrate succinate, while the binding sites for coenzyme A and phosphate are found in the alpha subunit. This chain is Succinate--CoA ligase [ADP-forming] subunit beta, found in Cereibacter sphaeroides (strain ATCC 17025 / ATH 2.4.3) (Rhodobacter sphaeroides).